The following is a 372-amino-acid chain: Chaperone protein DnaJ (372 aa).

Residues 5 to 70 form the J domain; sequence DYYDLLEVGR…EKRAGYDRYG (66 aa). The segment at 134–212 adopts a CR-type zinc-finger fold; that stretch reads GIQAPIHYVT…CGGSGRRRDE (79 aa). Zn(2+) is bound by residues cysteine 147, cysteine 150, cysteine 164, cysteine 167, cysteine 186, cysteine 189, cysteine 200, and cysteine 203. CXXCXGXG motif repeat units lie at residues 147 to 154, 164 to 171, 186 to 193, and 200 to 207; these read CDTCQGTG, CHTCQGSG, CTTCYGEG, and CKKCGGSG.

The protein belongs to the DnaJ family. As to quaternary structure, homodimer. The cofactor is Zn(2+).

It localises to the cytoplasm. In terms of biological role, participates actively in the response to hyperosmotic and heat shock by preventing the aggregation of stress-denatured proteins and by disaggregating proteins, also in an autonomous, DnaK-independent fashion. Unfolded proteins bind initially to DnaJ; upon interaction with the DnaJ-bound protein, DnaK hydrolyzes its bound ATP, resulting in the formation of a stable complex. GrpE releases ADP from DnaK; ATP binding to DnaK triggers the release of the substrate protein, thus completing the reaction cycle. Several rounds of ATP-dependent interactions between DnaJ, DnaK and GrpE are required for fully efficient folding. Also involved, together with DnaK and GrpE, in the DNA replication of plasmids through activation of initiation proteins. The chain is Chaperone protein DnaJ from Wolbachia sp. subsp. Drosophila simulans (strain wRi).